Here is an 87-residue protein sequence, read N- to C-terminus: Small ribosomal subunit protein uS17 (87 aa).

It belongs to the universal ribosomal protein uS17 family. As to quaternary structure, part of the 30S ribosomal subunit.

In terms of biological role, one of the primary rRNA binding proteins, it binds specifically to the 5'-end of 16S ribosomal RNA. This chain is Small ribosomal subunit protein uS17, found in Neisseria meningitidis serogroup C (strain 053442).